Consider the following 264-residue polypeptide: Thymidylate synthase (264 aa).

A dUMP-binding site is contributed by Arg-21. Residue His-51 participates in (6R)-5,10-methylene-5,6,7,8-tetrahydrofolate binding. Residue 126-127 (RR) participates in dUMP binding. The active-site Nucleophile is Cys-146. DUMP-binding positions include 166 to 169 (RSAD), Asn-177, and 207 to 209 (HLY). Position 169 (Asp-169) interacts with (6R)-5,10-methylene-5,6,7,8-tetrahydrofolate. Ala-263 contributes to the (6R)-5,10-methylene-5,6,7,8-tetrahydrofolate binding site.

This sequence belongs to the thymidylate synthase family. Bacterial-type ThyA subfamily. In terms of assembly, homodimer.

The protein localises to the cytoplasm. It catalyses the reaction dUMP + (6R)-5,10-methylene-5,6,7,8-tetrahydrofolate = 7,8-dihydrofolate + dTMP. Its pathway is pyrimidine metabolism; dTTP biosynthesis. Functionally, catalyzes the reductive methylation of 2'-deoxyuridine-5'-monophosphate (dUMP) to 2'-deoxythymidine-5'-monophosphate (dTMP) while utilizing 5,10-methylenetetrahydrofolate (mTHF) as the methyl donor and reductant in the reaction, yielding dihydrofolate (DHF) as a by-product. This enzymatic reaction provides an intracellular de novo source of dTMP, an essential precursor for DNA biosynthesis. This is Thymidylate synthase from Rhodopirellula baltica (strain DSM 10527 / NCIMB 13988 / SH1).